The sequence spans 358 residues: NADH-quinone oxidoreductase subunit H (358 aa).

Transmembrane regions (helical) follow at residues 20–40 (ITVGLVVSVIVKIVIILIPLI), 95–115 (ALFYIGPIMSLAPSFAAWAVI), 128–148 (IGLLYILMITSLSVYGVIIAG), 168–188 (ISYEIAMSAALVCVVMVSGSM), 206–226 (VFSWNWLPLFPIFIVYLISAV), 253–273 (GFAFALFFLAEYIFMILISAL), 290–310 (WGFIGTPSAFWMFVKMAAVLY), and 334–354 (VLIPIGFAYIVVLGVWMISPL).

It belongs to the complex I subunit 1 family. In terms of assembly, NDH-1 is composed of 14 different subunits. Subunits NuoA, H, J, K, L, M, N constitute the membrane sector of the complex.

The protein localises to the cell inner membrane. It catalyses the reaction a quinone + NADH + 5 H(+)(in) = a quinol + NAD(+) + 4 H(+)(out). Functionally, NDH-1 shuttles electrons from NADH, via FMN and iron-sulfur (Fe-S) centers, to quinones in the respiratory chain. The immediate electron acceptor for the enzyme in this species is believed to be ubiquinone. Couples the redox reaction to proton translocation (for every two electrons transferred, four hydrogen ions are translocated across the cytoplasmic membrane), and thus conserves the redox energy in a proton gradient. This subunit may bind ubiquinone. This Neisseria meningitidis serogroup C (strain 053442) protein is NADH-quinone oxidoreductase subunit H.